A 1120-amino-acid chain; its full sequence is DNA-directed RNA polymerase subunit beta (1120 aa).

It belongs to the RNA polymerase beta chain family. In terms of assembly, in plastids the minimal PEP RNA polymerase catalytic core is composed of four subunits: alpha, beta, beta', and beta''. When a (nuclear-encoded) sigma factor is associated with the core the holoenzyme is formed, which can initiate transcription.

The protein localises to the plastid. The protein resides in the chloroplast. The catalysed reaction is RNA(n) + a ribonucleoside 5'-triphosphate = RNA(n+1) + diphosphate. Functionally, DNA-dependent RNA polymerase catalyzes the transcription of DNA into RNA using the four ribonucleoside triphosphates as substrates. This Gracilaria tenuistipitata var. liui (Red alga) protein is DNA-directed RNA polymerase subunit beta.